A 689-amino-acid chain; its full sequence is Calcium-responsive transcription factor (689 aa).

Disordered regions lie at residues 1–46 and 541–609; these read MEQR…PTIL and SPDG…SVPN. Basic and acidic residues predominate over residues 13-29; sequence DGEKSEREAQGFEHRTC. 2 stretches are compositionally biased toward polar residues: residues 541–559 and 578–601; these read SPDGSQALVSVDSHASSSP and LGQSQNPGTDTCLTQDNSTSSSTG.

In terms of tissue distribution, highly expressed in brain and testis.

The protein localises to the nucleus. Acts as a transcriptional activator that mediates the calcium- and neuron-selective induction of BDNF exon III transcription. Binds to the consensus calcium-response element CaRE1 5'-CTATTTCGAG-3' sequence. This is Calcium-responsive transcription factor (Carf) from Mus musculus (Mouse).